The primary structure comprises 219 residues: Flagellar L-ring protein (219 aa).

Residues 1–14 form the signal peptide; sequence MKRLVLISLVLAAG. Cys-15 is lipidated: N-palmitoyl cysteine. Residue Cys-15 is the site of S-diacylglycerol cysteine attachment.

The protein belongs to the FlgH family. In terms of assembly, the basal body constitutes a major portion of the flagellar organelle and consists of four rings (L,P,S, and M) mounted on a central rod.

The protein localises to the cell outer membrane. Its subcellular location is the bacterial flagellum basal body. Functionally, assembles around the rod to form the L-ring and probably protects the motor/basal body from shearing forces during rotation. This chain is Flagellar L-ring protein, found in Dechloromonas aromatica (strain RCB).